A 237-amino-acid chain; its full sequence is Probable transcriptional regulatory protein Mfl546 (237 aa).

The interval 1–20 is disordered; sequence MGRAHEVRAASMAKTAAKKS. The span at 9–20 shows a compositional bias: low complexity; it reads AASMAKTAAKKS.

The protein belongs to the TACO1 family.

Its subcellular location is the cytoplasm. The protein is Probable transcriptional regulatory protein Mfl546 of Mesoplasma florum (strain ATCC 33453 / NBRC 100688 / NCTC 11704 / L1) (Acholeplasma florum).